A 423-amino-acid polypeptide reads, in one-letter code: Gamma-glutamyl phosphate reductase (423 aa).

This sequence belongs to the gamma-glutamyl phosphate reductase family.

It is found in the cytoplasm. It catalyses the reaction L-glutamate 5-semialdehyde + phosphate + NADP(+) = L-glutamyl 5-phosphate + NADPH + H(+). The protein operates within amino-acid biosynthesis; L-proline biosynthesis; L-glutamate 5-semialdehyde from L-glutamate: step 2/2. Functionally, catalyzes the NADPH-dependent reduction of L-glutamate 5-phosphate into L-glutamate 5-semialdehyde and phosphate. The product spontaneously undergoes cyclization to form 1-pyrroline-5-carboxylate. This chain is Gamma-glutamyl phosphate reductase, found in Burkholderia thailandensis (strain ATCC 700388 / DSM 13276 / CCUG 48851 / CIP 106301 / E264).